The following is a 145-amino-acid chain: Flagellar assembly factor FliW (145 aa).

This sequence belongs to the FliW family. In terms of assembly, interacts with translational regulator CsrA and flagellin(s).

Its subcellular location is the cytoplasm. In terms of biological role, acts as an anti-CsrA protein, binds CsrA and prevents it from repressing translation of its target genes, one of which is flagellin. Binds to flagellin and participates in the assembly of the flagellum. The sequence is that of Flagellar assembly factor FliW from Clostridium tetani (strain Massachusetts / E88).